Reading from the N-terminus, the 225-residue chain is Ribonuclease 3 (225 aa).

The RNase III domain occupies 4–133 (FEKLETLLGY…LIAAIYLDSN (130 aa)). A Mg(2+)-binding site is contributed by glutamate 46. Aspartate 50 is an active-site residue. 2 residues coordinate Mg(2+): asparagine 119 and glutamate 122. Glutamate 122 is a catalytic residue. In terms of domain architecture, DRBM spans 158-225 (DPKTALQEWA…AARSLLHRLK (68 aa)).

Belongs to the ribonuclease III family. In terms of assembly, homodimer. The cofactor is Mg(2+).

The protein localises to the cytoplasm. The catalysed reaction is Endonucleolytic cleavage to 5'-phosphomonoester.. Its function is as follows. Digests double-stranded RNA. Involved in the processing of primary rRNA transcript to yield the immediate precursors to the large and small rRNAs (23S and 16S). Processes some mRNAs, and tRNAs when they are encoded in the rRNA operon. Processes pre-crRNA and tracrRNA of type II CRISPR loci if present in the organism. The protein is Ribonuclease 3 of Rickettsia prowazekii (strain Madrid E).